A 734-amino-acid polypeptide reads, in one-letter code: Terpene cyclase/mutase ntnI (734 aa).

A compositionally biased stretch (polar residues) spans 1-12 (MQSHIGQWTSTA). The segment at 1 to 26 (MQSHIGQWTSTAKGHLSRDENGDEKT) is disordered. Basic and acidic residues predominate over residues 16-26 (LSRDENGDEKT). PFTB repeat units follow at residues 130–172 (AIEI…RLLG), 493–534 (LHNA…SGKT), 570–610 (RTRG…ALAG), and 619–668 (SRKG…GLMH).

The protein belongs to the terpene cyclase/mutase family.

Its pathway is secondary metabolite biosynthesis; terpenoid biosynthesis. Functionally, terpene cyclase/mutase; part of the gene cluster that mediates the biosynthesis of the meroterpenoids nectripenoids A and B, as well as cochliquninone D and isocochliquninone E. The pathway probably begins with the HR-PKS ntnH that catalyzes two chain-extension steps to form a reduced triketide, which then primes the SAT domain in the NR-PKS ntnG to initiate three more cycles of extension to give a linear hexaketide corresponding to the polyketide part of nectripenoids. The FAD-dependent monooxygenase ntnJ then performs an oxidative decarboxylation at C11 of the ntnH/ntnG product, via an electrophilic aromatic hydroxylation with concomitant ipso-decarboxylation. The membrane-bound polyprenyl transferase ntnF then introduces a farnesyl group before the FAD-dependent monooxygenase ntnK functions as the first epoxidase on terminal C12'-C13' olefin, followed by a second epoxidation on C7'-C8' catalyzed by ntnA. The terpene cyclase/mutase ntnI then initiates the sequential tricyclic ring formation through protonation of the terminal epoxide and catalyzes the regioselective and stereoselective 6/6/6-tricyclic ring formation. The cytochrome P450 monooxygenase ntnM may then hydroxylate C1'. The polypeptide is Terpene cyclase/mutase ntnI (Nectria sp).